We begin with the raw amino-acid sequence, 115 residues long: MEIEMLYSKIHRATVTDANLNYVGSITIDERLMKAANLLEFQKVEILDINNGERFQTYVIKGEKKGEICLNGAAARKVCIGDIIIIVSYASMKRKKAKNFSPTIVHVNEKNEINE.

The active-site Schiff-base intermediate with substrate; via pyruvic acid is serine 25. The residue at position 25 (serine 25) is a Pyruvic acid (Ser). A substrate-binding site is contributed by threonine 57. Tyrosine 58 acts as the Proton donor in catalysis. Residue 72-74 (GAA) participates in substrate binding.

This sequence belongs to the PanD family. In terms of assembly, heterooctamer of four alpha and four beta subunits. It depends on pyruvate as a cofactor. Is synthesized initially as an inactive proenzyme, which is activated by self-cleavage at a specific serine bond to produce a beta-subunit with a hydroxyl group at its C-terminus and an alpha-subunit with a pyruvoyl group at its N-terminus.

Its subcellular location is the cytoplasm. The enzyme catalyses L-aspartate + H(+) = beta-alanine + CO2. Its pathway is cofactor biosynthesis; (R)-pantothenate biosynthesis; beta-alanine from L-aspartate: step 1/1. Catalyzes the pyruvoyl-dependent decarboxylation of aspartate to produce beta-alanine. In Campylobacter fetus subsp. fetus (strain 82-40), this protein is Aspartate 1-decarboxylase.